The sequence spans 223 residues: Neurotrophic factor BDNF precursor form (223 aa).

The N-terminal stretch at 1 to 5 is a signal peptide; sequence SCMKA. A propeptide spanning residues 6–114 is cleaved from the precursor; the sequence is APMKEVSIRG…AANMSMRVRR (109 aa). N-linked (GlcNAc...) asparagine glycosylation occurs at Asn107. 2 disulfide bridges follow: Cys127/Cys194 and Cys172/Cys223.

It belongs to the NGF-beta family.

It is found in the secreted. In terms of biological role, promotes the survival of neuronal populations that are all located either in the central nervous system or directly connected to it. The chain is Neurotrophic factor BDNF precursor form (BDNF) from Aspidites melanocephalus (Black-headed python).